The chain runs to 117 residues: NADH dehydrogenase [ubiquinone] 1 beta subcomplex subunit 9 (117 aa).

Ser-2 is modified (N-acetylserine).

The protein belongs to the complex I LYR family. As to quaternary structure, complex I is composed of at least 49 different subunits. As to expression, expressed in roots, stems, flowers, rosette leaves, cauline leaves and siliques, with the highest expression in the stems.

The protein resides in the mitochondrion inner membrane. Accessory subunit of the mitochondrial membrane respiratory chain NADH dehydrogenase (Complex I), that is believed to be not involved in catalysis. Complex I functions in the transfer of electrons from NADH to the respiratory chain. The immediate electron acceptor for the enzyme is believed to be ubiquinone. Is required for correct plant growth and development. The polypeptide is NADH dehydrogenase [ubiquinone] 1 beta subcomplex subunit 9 (CIB22) (Arabidopsis thaliana (Mouse-ear cress)).